Here is a 147-residue protein sequence, read N- to C-terminus: Ponticulin-like protein C3 (147 aa).

Residues 1-20 (MKFTKSLLLLIVAVFASSNA) form the signal peptide. Asparagine 118 is lipidated: GPI-like-anchor amidated asparagine. Asparagine 118 carries N-linked (GlcNAc...) asparagine glycosylation. Residues 119–147 (SSESDSSDSTRIGASFALFALALLSMLAL) constitute a propeptide, removed in mature form.

It belongs to the ponticulin family. The GPI-like-anchor contains a phosphoceramide group, rather than a phosphatidyl group.

It is found in the cell membrane. The sequence is that of Ponticulin-like protein C3 (ponC3) from Dictyostelium discoideum (Social amoeba).